The following is a 494-amino-acid chain: Tripartite motif-containing protein 5 (494 aa).

N-acetylalanine is present on Ala2. The RING-type zinc-finger motif lies at 15–59 (CPICLELLTEPLSLDCGHSFCQACITANHKESTPHQGERSCPLCR). Ser86 carries the phosphoserine modification. Residues 91-132 (QKVGHCARHGEKLLLFCEQDGNVICWLCERSQEHRGHHTLLV) form a B box-type zinc finger. Zn(2+) contacts are provided by Cys96, His99, Cys118, and His124. Residues 131–223 (LVEEVAEKYQ…RLVQSESDMV (93 aa)) are a coiled coil. The segment at 186 to 199 (FKQLRDILDCEESK) is required for interaction with GABARAP and for autophagy. Residues 280-494 (PDLKAMLQAF…LPMTLCSPSS (215 aa)) enclose the B30.2/SPRY domain.

Belongs to the TRIM/RBCC family. Can form homodimers and homotrimers. In addition to lower-order dimerization, also exhibits a higher-order multimerization and both low- and high-order multimerizations are essential for its restriction activity. Interacts with BTBD1 and BTBD2. Interacts with PSMC4, PSMC5, PSMD7 and HSPA8/HSC70. Interacts (via B30.2/SPRY domain) with HSPA1A/B. Interacts with PSMC2, MAP3K7/TAK1, TAB2 and TAB3. Interacts with SQSTM1. Interacts with TRIM6 and TRIM34. Interacts with ULK1 (phosphorylated form), GABARAP, GABARAPL1, GABARAPL2, MAP1LC3A, MAP1LC3C and BECN1. In terms of processing, degraded in a proteasome-independent fashion in the absence of viral infection but in a proteasome-dependent fashion following exposure to restriction sensitive virus. Post-translationally, autoubiquitinated in a RING finger- and UBE2D2-dependent manner. Monoubiquitinated by TRIM21. Deubiquitinated by Yersinia YopJ. Ubiquitination may not lead to proteasomal degradation.

It localises to the cytoplasm. The protein resides in the nucleus. It catalyses the reaction S-ubiquitinyl-[E2 ubiquitin-conjugating enzyme]-L-cysteine + [acceptor protein]-L-lysine = [E2 ubiquitin-conjugating enzyme]-L-cysteine + N(6)-ubiquitinyl-[acceptor protein]-L-lysine.. It functions in the pathway protein modification; protein ubiquitination. Functionally, capsid-specific restriction factor that prevents infection from non-host-adapted retroviruses. Blocks viral replication early in the life cycle, after viral entry but before reverse transcription. In addition to acting as a capsid-specific restriction factor, also acts as a pattern recognition receptor that activates innate immune signaling in response to the retroviral capsid lattice. Binding to the viral capsid triggers its E3 ubiquitin ligase activity, and in concert with the heterodimeric ubiquitin conjugating enzyme complex UBE2V1-UBE2N (also known as UBC13-UEV1A complex) generates 'Lys-63'-linked polyubiquitin chains, which in turn are catalysts in the autophosphorylation of the MAP3K7/TAK1 complex (includes TAK1, TAB2, and TAB3). Activation of the MAP3K7/TAK1 complex by autophosphorylation results in the induction and expression of NF-kappa-B and MAPK-responsive inflammatory genes, thereby leading to an innate immune response in the infected cell. Plays a role in regulating autophagy through activation of autophagy regulator BECN1 by causing its dissociation from its inhibitors BCL2 and TAB2. This is Tripartite motif-containing protein 5 (TRIM5) from Saguinus labiatus (Red-chested mustached tamarin).